Reading from the N-terminus, the 478-residue chain is MSKKKKFVEAITPMDEDFAKWYTDIVKKAELVDYASVKGCMIIRPYGYAIWENIQKYLDTKFKETGHENVYMPMFIPESLLQKEKDHVEGFAPEVAWVTQGGNDTLAERLCVRPTSETLFCDHYAKIIQSHNDLPKKYNQWCSVVRWEKTTRPFLRTTEFLWQEGHTAHATAEESAKETIDMLNVYANFCENVLAIPVIKGQKTEKEKFAGAKATYTIESLMHDGKALQSGTSHNFGDNFSKAFNIQYNDKNSQLQYVHQTSWGVTTRLIGAIIMVHGDDSGLKLPPRIAPLQVVIVPIAQHKEGVLDKAEELRQRIAKVARVKVDSSDKMPGWKFNEYEMKGVPVRLEVGPKDIENNQVVLVRRDTREKIFVSMDELETKIPELLDEIHNSMLEHARTHRDEHTYTAKTLDEFKEIADTKPGFIKAMWCGDTACEEKLKEVAGVSSRCMPFEQEEITDKCICCGKEAKHMVYWGKAY.

The protein belongs to the class-II aminoacyl-tRNA synthetase family. ProS type 3 subfamily. As to quaternary structure, homodimer.

It localises to the cytoplasm. It carries out the reaction tRNA(Pro) + L-proline + ATP = L-prolyl-tRNA(Pro) + AMP + diphosphate. In terms of biological role, catalyzes the attachment of proline to tRNA(Pro) in a two-step reaction: proline is first activated by ATP to form Pro-AMP and then transferred to the acceptor end of tRNA(Pro). This chain is Proline--tRNA ligase, found in Clostridium novyi (strain NT).